Consider the following 875-residue polypeptide: MKTTAQIRQSYLDFFHSKGHQVVESSSLVPHNDPTLLFTNAGMNQFKDVFLGMDKRPYTRATTAQRCVRAGGKHNDLENVGYTARHHTFFEMLGNFSFGDYFKHDAIAYGWEFLTSPQWLGLPKEKLYVTVYETDDEAYDIWNKEVGVPADHIIRIGDNKGAPYASDNFWAMGDTGPCGPCTEIFYDHGEHIWGGLPGTPEEDGDRYIEIWNIVFMQFNRHADGTMEKLPKPSVDTGMGLERIAAVLQHVNSNYDIDIFQTLIKKVAQLTGEKDLTNKSLRVIADHIRSCAYLIADGVMPSNEGRGYVLRRIIRRAVRHGHLLGAKETFFYKLVPTLADVMEHAGEIVNQKRALIEKTLKAEEEQFARTLERGLLLLDDALSQVKDNVLSGDVAFKLYDTYGFPLDLTADVCRERNITIDEKGFEREMQAQRARAQASSNFGVDYNNVIKVDGQTEFKGYETTSLSSAKVVALFTDGKSVERVQSGENAVVILDRTPFYGESGGQIGDTGYIATDLAAFRINDTQKYGQVTGHIGQLESGSLSVGDTVSAQVDTERRLAVAANHSATHLLHAALRKVLGDHVAQKGSLVSESALRFDFIQPEAISKEQIIEIEAIVNRQIRENISVTTEVMDIEAAKQKGAMALFGEKYGDLVRVVGMTGFSIELCGGTHVKRTGDIGLFKVVSESAIAAGIRRIEAVTAENAINWLNNQQNILNQSADLLKSDTASLVEKIQQLQDKAKKAEKELQQLKEKAAMQAGSDLAKSAVKINDISVIVQQLDGIETKSLRVMVDDLKNQLGSGVIVFASVVEDKVNLIVGVTADLTGKVKAGELVNLMAQQVGGKGGGRPDMAMAGGSQPENVGAALSACSDWLESNL.

Residues His-564, His-568, Cys-666, and His-670 each contribute to the Zn(2+) site.

It belongs to the class-II aminoacyl-tRNA synthetase family. The cofactor is Zn(2+).

The protein localises to the cytoplasm. The enzyme catalyses tRNA(Ala) + L-alanine + ATP = L-alanyl-tRNA(Ala) + AMP + diphosphate. In terms of biological role, catalyzes the attachment of alanine to tRNA(Ala) in a two-step reaction: alanine is first activated by ATP to form Ala-AMP and then transferred to the acceptor end of tRNA(Ala). Also edits incorrectly charged Ser-tRNA(Ala) and Gly-tRNA(Ala) via its editing domain. The protein is Alanine--tRNA ligase of Mannheimia succiniciproducens (strain KCTC 0769BP / MBEL55E).